We begin with the raw amino-acid sequence, 310 residues long: Ribosomal RNA small subunit methyltransferase H (310 aa).

S-adenosyl-L-methionine contacts are provided by residues 32–34 (AGH), Asp-51, Phe-78, Asp-99, and Gln-106.

This sequence belongs to the methyltransferase superfamily. RsmH family.

It is found in the cytoplasm. It carries out the reaction cytidine(1402) in 16S rRNA + S-adenosyl-L-methionine = N(4)-methylcytidine(1402) in 16S rRNA + S-adenosyl-L-homocysteine + H(+). In terms of biological role, specifically methylates the N4 position of cytidine in position 1402 (C1402) of 16S rRNA. The chain is Ribosomal RNA small subunit methyltransferase H from Macrococcus caseolyticus (strain JCSC5402) (Macrococcoides caseolyticum).